We begin with the raw amino-acid sequence, 283 residues long: Small ribosomal subunit protein uS2 (283 aa).

The segment at 229–283 is disordered; sequence RSAGKSGEQPAEAEPMPDWERELLEGDGAKTEAKAEEPKAEAKKADEAPEAEKSN. Residues 246-283 are compositionally biased toward basic and acidic residues; that stretch reads DWERELLEGDGAKTEAKAEEPKAEAKKADEAPEAEKSN.

Belongs to the universal ribosomal protein uS2 family.

The chain is Small ribosomal subunit protein uS2 from Cutibacterium acnes (strain DSM 16379 / KPA171202) (Propionibacterium acnes).